We begin with the raw amino-acid sequence, 251 residues long: Segregation and condensation protein A (251 aa).

This sequence belongs to the ScpA family. As to quaternary structure, component of a cohesin-like complex composed of ScpA, ScpB and the Smc homodimer, in which ScpA and ScpB bind to the head domain of Smc. The presence of the three proteins is required for the association of the complex with DNA.

It localises to the cytoplasm. In terms of biological role, participates in chromosomal partition during cell division. May act via the formation of a condensin-like complex containing Smc and ScpB that pull DNA away from mid-cell into both cell halves. The polypeptide is Segregation and condensation protein A (Bacillus velezensis (strain DSM 23117 / BGSC 10A6 / LMG 26770 / FZB42) (Bacillus amyloliquefaciens subsp. plantarum)).